The primary structure comprises 421 residues: Putative nickel insertion protein (421 aa).

It belongs to the LarC family.

This is Putative nickel insertion protein from Gloeobacter violaceus (strain ATCC 29082 / PCC 7421).